Here is a 327-residue protein sequence, read N- to C-terminus: MSSQFEQLKLLSVLVCDTGDPELVKTSGSQDATTNPSLILKVAQEPKYQELLTEAIAWGIRQNGDDIQTLTFVLDKIQVNFGLEILKCIPGRVSLEIDARLSFNTEAMIQRAIFLSELFAATGGDKKRLLVKIPGTWEGIRAVEVLEKQGIACNVTLIFNLIQAIAAAKANATLISPFVGRIYDWWIAAYGDEGYSIDADPGVASVSNIYTYYKKFDIPTQIMAASFRSKEQVLALAGCDLLTVSPKLLDELKKDQSPVAKKLDVAAAKKLDVQPVELTESVFRFLMNEDAMATEKLAEGIRIFSGDTQILEAAVTEFIKQIAAQDA.

Residue lysine 132 is the Schiff-base intermediate with substrate of the active site.

Belongs to the transaldolase family. Type 1 subfamily. In terms of assembly, homodimer.

The protein localises to the cytoplasm. It carries out the reaction D-sedoheptulose 7-phosphate + D-glyceraldehyde 3-phosphate = D-erythrose 4-phosphate + beta-D-fructose 6-phosphate. It participates in carbohydrate degradation; pentose phosphate pathway; D-glyceraldehyde 3-phosphate and beta-D-fructose 6-phosphate from D-ribose 5-phosphate and D-xylulose 5-phosphate (non-oxidative stage): step 2/3. Its function is as follows. Transaldolase is important for the balance of metabolites in the pentose-phosphate pathway. This is Transaldolase from Chlamydia caviae (strain ATCC VR-813 / DSM 19441 / 03DC25 / GPIC) (Chlamydophila caviae).